The primary structure comprises 1063 residues: Error-prone DNA polymerase (1063 aa).

This sequence belongs to the DNA polymerase type-C family. DnaE2 subfamily.

The protein resides in the cytoplasm. The enzyme catalyses DNA(n) + a 2'-deoxyribonucleoside 5'-triphosphate = DNA(n+1) + diphosphate. Its function is as follows. DNA polymerase involved in damage-induced mutagenesis and translesion synthesis (TLS). It is not the major replicative DNA polymerase. The sequence is that of Error-prone DNA polymerase from Burkholderia mallei (strain ATCC 23344).